We begin with the raw amino-acid sequence, 748 residues long: Choline O-acetyltransferase (748 aa).

Residues 1-10 (MGLRTAKKRG) are compositionally biased toward basic residues. The segment at 1 to 89 (MGLRTAKKRG…EWCGAASAEA (89 aa)) is disordered. Basic and acidic residues predominate over residues 17 to 32 (WKREEGGGTRGRREVR). Positions 40 to 53 (GGRGDPGDVGGPAG) are enriched in gly residues. Composition is skewed to low complexity over residues 54–65 (NPGCSPHPRAAT) and 73–89 (HTPA…SAEA). The residue at position 125 (S125) is a Phosphoserine. The Proton acceptor role is filled by H442. A Phosphoserine modification is found at S473. Residues 520 to 532 (GKTF…CSPD), S558, and Q659 contribute to the CoA site. The segment at 727 to 748 (PTESKPLATKEKATRPSQGHQP) is disordered.

It belongs to the carnitine/choline acetyltransferase family.

It catalyses the reaction choline + acetyl-CoA = acetylcholine + CoA. Functionally, catalyzes the reversible synthesis of acetylcholine (ACh) from acetyl CoA and choline at cholinergic synapses. The sequence is that of Choline O-acetyltransferase (CHAT) from Homo sapiens (Human).